The chain runs to 1529 residues: Myosin-11 (1529 aa).

One can recognise a Myosin N-terminal SH3-like domain in the interval 11 to 60; sequence IVGSHVWIEDSDVAWIDGLVEKINGQDVEVQATNGKKITAKLSKIYPKDM. A Myosin motor domain is found at 65-735; sequence GGVDDMTKLS…QMAELDARRT (671 aa). ATP contacts are provided by residues 159–166 and 212–220; these read GESGAGKT and NNNSSRFGK. Actin-binding stretches follow at residues 498–532, 534–557, 592–616, and 616–638; these read LIEK…YQTF, THKR…AGEV, FPPL…KLQL, and LQQL…KPNN. IQ domains follow at residues 738 to 767, 761 to 790, 786 to 815, 809 to 838, 834 to 863, and 857 to 886; these read LSAA…ATIS, LRKA…QAAA, RQAA…AALV, LHVA…TKAA, QTKA…GVIL, and LKKG…ASRE. Residues 887-1059 adopt a coiled-coil conformation; the sequence is TGALKEAKDM…VLRQQAVSIA (173 aa). Residues 993–1027 show a composition bias toward basic and acidic residues; sequence EQEKQRADDATRKFDEAQESSEDRKKKLEDTEKKA. Disordered stretches follow at residues 993–1031 and 1096–1115; these read EQEK…QQLQ and INRR…LNEK. The 310-residue stretch at 1163–1472 folds into the Dilute domain; sequence DRIIQTIGQA…IANMRVLMTE (310 aa).

This sequence belongs to the TRAFAC class myosin-kinesin ATPase superfamily. Myosin family. Plant myosin class XI subfamily. In terms of assembly, homodimer.

The protein resides in the cytoplasm. Myosin heavy chain that is required for the cell cycle-regulated transport of various organelles and proteins for their segregation. Functions by binding with its tail domain to receptor proteins on organelles and exerting force with its N-terminal motor domain against actin filaments, thereby transporting its cargo along polarized actin cables. Involved in trafficking of Golgi stacks, mitochondria and peroxisomes. The protein is Myosin-11 (XI-E) of Arabidopsis thaliana (Mouse-ear cress).